Reading from the N-terminus, the 156-residue chain is Small ribosomal subunit protein uS7 (156 aa).

It belongs to the universal ribosomal protein uS7 family. Part of the 30S ribosomal subunit. Contacts proteins S9 and S11.

Its function is as follows. One of the primary rRNA binding proteins, it binds directly to 16S rRNA where it nucleates assembly of the head domain of the 30S subunit. Is located at the subunit interface close to the decoding center, probably blocks exit of the E-site tRNA. The protein is Small ribosomal subunit protein uS7 of Vibrio atlanticus (strain LGP32) (Vibrio splendidus (strain Mel32)).